Consider the following 403-residue polypeptide: Phosphoglycerate kinase (403 aa).

Substrate-binding positions include 24–26 (DLN), R39, 62–65 (HLGR), R121, and R161. ATP-binding positions include K211, G299, E330, and 359–362 (GGDS).

Belongs to the phosphoglycerate kinase family. In terms of assembly, monomer.

The protein localises to the cytoplasm. The catalysed reaction is (2R)-3-phosphoglycerate + ATP = (2R)-3-phospho-glyceroyl phosphate + ADP. Its pathway is carbohydrate degradation; glycolysis; pyruvate from D-glyceraldehyde 3-phosphate: step 2/5. The chain is Phosphoglycerate kinase from Corynebacterium kroppenstedtii (strain DSM 44385 / JCM 11950 / CIP 105744 / CCUG 35717).